Consider the following 105-residue polypeptide: DNA-directed RNA polymerase subunit Rpo13 (105 aa).

Basic and acidic residues-rich tracts occupy residues 1–10 (MSEDDSKKEP) and 70–80 (FDDVARSYSKA). Disordered stretches follow at residues 1 to 35 (MSED…GGEF) and 70 to 105 (FDDV…EEEE). Residues 81-97 (DKKKRRVEKKPKKGKVT) show a composition bias toward basic residues.

The protein belongs to the archaeal Rpo13 RNA polymerase subunit family. In terms of assembly, part of the 13-subunit RNA polymerase.

It is found in the cytoplasm. The enzyme catalyses RNA(n) + a ribonucleoside 5'-triphosphate = RNA(n+1) + diphosphate. In terms of biological role, DNA-dependent RNA polymerase catalyzes the transcription of DNA into RNA using the four ribonucleoside triphosphates as substrates. In vitro binds dsDNA but not ssDNA. In Sulfolobus acidocaldarius (strain ATCC 33909 / DSM 639 / JCM 8929 / NBRC 15157 / NCIMB 11770), this protein is DNA-directed RNA polymerase subunit Rpo13.